Consider the following 1247-residue polypeptide: Probable phosphorylase b kinase regulatory subunit alpha (1247 aa).

Positions 853 to 883 (LKGLYEKACQQKLWGLVRHTAGMLGKRVEDL) are calmodulin-binding. 2 positions are modified to phosphoserine: serine 1030 and serine 1033. Positions 1052-1089 (DRQGQWLRRRRLDGALNRVPRDFYSRVWTVLEKCQGLA) are calmodulin-binding. Residue cysteine 1244 is the site of S-farnesyl cysteine attachment.

This sequence belongs to the phosphorylase b kinase regulatory chain family. Post-translationally, although the final Cys may be farnesylated, the terminal tripeptide is probably not removed, and the C-terminus is not methylated.

Its subcellular location is the cell membrane. Its pathway is glycan biosynthesis; glycogen metabolism. Functionally, phosphorylase b kinase catalyzes the phosphorylation of serine in certain substrates, including troponin I. The alpha chain may bind calmodulin. The protein is Probable phosphorylase b kinase regulatory subunit alpha of Drosophila melanogaster (Fruit fly).